Consider the following 349-residue polypeptide: DNA replication and repair protein RecF (349 aa).

30–37 (GKNGSGKT) provides a ligand contact to ATP.

The protein belongs to the RecF family.

The protein localises to the cytoplasm. The RecF protein is involved in DNA metabolism; it is required for DNA replication and normal SOS inducibility. RecF binds preferentially to single-stranded, linear DNA. It also seems to bind ATP. The sequence is that of DNA replication and repair protein RecF from Francisella tularensis subsp. tularensis (strain FSC 198).